The following is a 171-amino-acid chain: Protein-export protein SecB (171 aa).

This sequence belongs to the SecB family. In terms of assembly, homotetramer, a dimer of dimers. One homotetramer interacts with 1 SecA dimer.

The protein localises to the cytoplasm. One of the proteins required for the normal export of preproteins out of the cell cytoplasm. It is a molecular chaperone that binds to a subset of precursor proteins, maintaining them in a translocation-competent state. It also specifically binds to its receptor SecA. The polypeptide is Protein-export protein SecB (Jannaschia sp. (strain CCS1)).